The following is a 750-amino-acid chain: Penicillin-binding protein 2x (750 aa).

The chain crosses the membrane as a helical span at residues 29–49; the sequence is LSLLSVFVFAIFLVNFAVIIG. The Acyl-ester intermediate role is filled by S337. 2 PASTA domains span residues 632–691 and 692–750; these read QQSP…ILSD and KAEE…TLGD.

It belongs to the transpeptidase family.

It localises to the cell membrane. In terms of biological role, a transpeptidase that forms peptide cross-links between adjacent glycan strands in cell wall peptidoglycan (PG). Part of the divisome machinery that synthesizes the septal cross wall. Beta-lactams inactivate the PBPs by acylating an essential serine residue in the active site of these proteins. The sequence is that of Penicillin-binding protein 2x (pbpX) from Streptococcus pneumoniae serotype 4 (strain ATCC BAA-334 / TIGR4).